A 415-amino-acid polypeptide reads, in one-letter code: D-galactonate dehydratase family member RspA (415 aa).

Substrate contacts are provided by Asn48 and His133. The active-site Proton donor/acceptor is the Tyr170. Asp223 is a Mg(2+) binding site. His225 serves as the catalytic Proton donor/acceptor. The Mg(2+) site is built by Glu249, Asp250, and Glu275. Substrate contacts are provided by Glu275, Arg296, His325, Asp329, and Glu352.

Belongs to the mandelate racemase/muconate lactonizing enzyme family. GalD subfamily. Mg(2+) serves as cofactor.

It catalyses the reaction D-mannonate = 2-dehydro-3-deoxy-D-gluconate + H2O. Its function is as follows. Has low D-mannonate dehydratase activity (in vitro), suggesting that this is not a physiological substrate and that it has no significant role in D-mannonate degradation in vivo. Has no detectable activity with a panel of 70 other acid sugars (in vitro). This chain is D-galactonate dehydratase family member RspA (rspA), found in Escherichia coli O6:H1 (strain CFT073 / ATCC 700928 / UPEC).